The sequence spans 147 residues: Large-conductance mechanosensitive channel (147 aa).

2 consecutive transmembrane segments (helical) span residues 14-34 (VVDM…VKSL) and 85-105 (FGLF…LFMI).

It belongs to the MscL family. Homopentamer.

It is found in the cell inner membrane. Channel that opens in response to stretch forces in the membrane lipid bilayer. May participate in the regulation of osmotic pressure changes within the cell. The polypeptide is Large-conductance mechanosensitive channel (Tolumonas auensis (strain DSM 9187 / NBRC 110442 / TA 4)).